The chain runs to 142 residues: Large ribosomal subunit protein uL13 (142 aa).

The protein belongs to the universal ribosomal protein uL13 family. As to quaternary structure, part of the 50S ribosomal subunit.

Functionally, this protein is one of the early assembly proteins of the 50S ribosomal subunit, although it is not seen to bind rRNA by itself. It is important during the early stages of 50S assembly. The protein is Large ribosomal subunit protein uL13 of Pseudomonas syringae pv. syringae (strain B728a).